An 864-amino-acid chain; its full sequence is MASSESRYSPTSLEPKWQQRWQEMGLDQTPEPSAERAENFYALSMFPYPSGNLHMGHVRNYVITDVIARLMRLKGKRVLHPMGWDAFGLPAENAAIERGVDPADWTDRNIAQMREQLQRLGLSIDWSREVATCHSDYYRWTQWLFLQFLNADLAYRKEATVNWDPIDQTVLANEQVDADGRSWRSGALAEKRKLRQWFLKITAVADELLDDLEQLKGWPERVRTMQANWIGRSSGATLRFAIEADGKQAIEVFTTRPDTVFGVSYVVLAPEHDLVDQLTSADQRQAVEAFRQSLQSISEQDRVADDRPKRGVATGGTVQHPFTGQAVPVWIADYVLPDYGTGAVMGVPAHDSRDFAFAKQYDLPITTVVVEPGQAPDSGEPSEAFTGLGELVGSADFDGLQGEEAKTAIIQAAEQRGVGAAKITFRLRDWLISRQRYWGCPIPVIHCDDCGVVPVPESDLPVELPRDVDLSGSGGSPLERATEWKQVRCPKCGKPATRETDTMDTFMCSSWYYLRYTDANNDSAAFTNASIDAWMPVDQYVGGVEHAILHLLYSRFFTKVLQQRNLVSCSEPFQKLLTQGMVQGVTYRNPKTRKYIAPSAVSDPNQPTDPDDGEALEVFFEKMSKSKYNGVDPGAVVDRYGADTARMFILFKAPPEKDLEWDDADVEGQFRFLQRIWRLCDGAKASGLQLQSPLPLPAELTPAETDLRRAVHTAIEAVSDDLQGDELQFNTAVSELMKLSNAMAGQLEAVSTAVAQEAVRSLLLLLAPFAPHLADELWEQLQGSGSIHQQRWPEVDASALVRDTITVVLQVKGKVRGNLEVPAAISKDELEQVALASDVAQKWLEGNAPKRVIVVPGKLVNLVP.

The short motif at 47 to 57 (PYPSGNLHMGH) is the 'HIGH' region element. The interval 298–317 (SEQDRVADDRPKRGVATGGT) is disordered. Basic and acidic residues predominate over residues 299–309 (EQDRVADDRPK). Positions 622–626 (KMSKS) match the 'KMSKS' region motif. Position 625 (lysine 625) interacts with ATP.

The protein belongs to the class-I aminoacyl-tRNA synthetase family.

It is found in the cytoplasm. The catalysed reaction is tRNA(Leu) + L-leucine + ATP = L-leucyl-tRNA(Leu) + AMP + diphosphate. The chain is Leucine--tRNA ligase from Synechococcus sp. (strain RCC307).